The sequence spans 218 residues: Cytidylate kinase (218 aa).

Residue 10–18 (GPAGSGKST) coordinates ATP.

Belongs to the cytidylate kinase family. Type 1 subfamily.

Its subcellular location is the cytoplasm. It carries out the reaction CMP + ATP = CDP + ADP. It catalyses the reaction dCMP + ATP = dCDP + ADP. The sequence is that of Cytidylate kinase from Fusobacterium nucleatum subsp. nucleatum (strain ATCC 25586 / DSM 15643 / BCRC 10681 / CIP 101130 / JCM 8532 / KCTC 2640 / LMG 13131 / VPI 4355).